Here is a 101-residue protein sequence, read N- to C-terminus: Small ribosomal subunit protein bS18c (101 aa).

Belongs to the bacterial ribosomal protein bS18 family. In terms of assembly, part of the 30S ribosomal subunit.

The protein resides in the plastid. The protein localises to the chloroplast. The protein is Small ribosomal subunit protein bS18c of Populus alba (White poplar).